The chain runs to 255 residues: MLLTIDIGNTNIKIGVYQDERLTAHWRVTTERHRLADEYLVLLHNLFDLGGIDPREIDGCAISCVVPPLTGEFRTLCRTYFRVEPLMVNATTPTGLRYNVDTPAELGADRIANSLAAFRRYGGPVIVLAFGTATTFDVITADGEYIGGAIAPGIGISADALFRLAAKLYQVELVRPPSVIGKNTIHHMQSGVILGYAGLVEGLVNRMQAELGTSCPVVATGGLAELIAAETEAITTVEPYLTLEGLRLIYEMNRS.

Position 6 to 13 (6 to 13 (DIGNTNIK)) interacts with ATP. A substrate-binding site is contributed by 107-110 (GADR). Asp-109 functions as the Proton acceptor in the catalytic mechanism. Thr-132 contributes to the ATP binding site. Position 184 (Thr-184) interacts with substrate.

It belongs to the type III pantothenate kinase family. As to quaternary structure, homodimer. NH4(+) is required as a cofactor. K(+) serves as cofactor.

Its subcellular location is the cytoplasm. The enzyme catalyses (R)-pantothenate + ATP = (R)-4'-phosphopantothenate + ADP + H(+). Its pathway is cofactor biosynthesis; coenzyme A biosynthesis; CoA from (R)-pantothenate: step 1/5. Catalyzes the phosphorylation of pantothenate (Pan), the first step in CoA biosynthesis. The protein is Type III pantothenate kinase of Roseiflexus sp. (strain RS-1).